A 112-amino-acid polypeptide reads, in one-letter code: Large ribosomal subunit protein uL22 (112 aa).

It belongs to the universal ribosomal protein uL22 family. As to quaternary structure, part of the 50S ribosomal subunit.

Its function is as follows. This protein binds specifically to 23S rRNA; its binding is stimulated by other ribosomal proteins, e.g. L4, L17, and L20. It is important during the early stages of 50S assembly. It makes multiple contacts with different domains of the 23S rRNA in the assembled 50S subunit and ribosome. The globular domain of the protein is located near the polypeptide exit tunnel on the outside of the subunit, while an extended beta-hairpin is found that lines the wall of the exit tunnel in the center of the 70S ribosome. The polypeptide is Large ribosomal subunit protein uL22 (Lawsonia intracellularis (strain PHE/MN1-00)).